We begin with the raw amino-acid sequence, 747 residues long: Putative T-box protein 31 (747 aa).

Positions 33–199 form a DNA-binding region, T-box; sequence QMLTKRKKTN…AGPAAKKTPD (167 aa). 2 disordered regions span residues 268–289 and 332–364; these read SLSS…DFDD and SINN…VRDK. Residues 332 to 358 show a composition bias toward polar residues; that stretch reads SINNPGYLSTASSPAALNQDSSASEKS.

Its subcellular location is the nucleus. The polypeptide is Putative T-box protein 31 (tbx-31) (Caenorhabditis elegans).